The chain runs to 435 residues: MTSFSPREIVSELDRYIVGQRDAKRAVAIALRNRWRRQQLPDALRDEVLPKNILMIGPTGVGKTEISRRLAKLAEAPFLKVEATKFTEVGYVGRDVEQIIRDLVEIALAMTRERKRKDVQAKAHVAAEGRVLDALVGANASEATRESFRRKLRDGELDEKEIEVEVADSGGGMPTFDIPGMPGSQMGMINLSDIMGKAFGGRTKTRRMAVRDSYDVLVAEESDKLLDQEQLTQEAIRSVENNGIVFLDEIDKICARAERQGGDVSREGVQRDLLPLIEGTTVATKHGAVKTDHILFIASGAFHIAKPSDLLPELQGRLPIRVELQALSKDDMRRVLTEPEASLIKQYVALLNTENVTLDFTDDGIDAIADIATSVNSTVENIGARRLHTVMERVLDEVSFAATDKAGETVTIDGAYVRKHLGDLSKNTDLSKFIL.

ATP-binding positions include V18, 60 to 65, D248, E313, and R385; that span reads GVGKTE.

It belongs to the ClpX chaperone family. HslU subfamily. In terms of assembly, a double ring-shaped homohexamer of HslV is capped on each side by a ring-shaped HslU homohexamer. The assembly of the HslU/HslV complex is dependent on binding of ATP.

It localises to the cytoplasm. Its function is as follows. ATPase subunit of a proteasome-like degradation complex; this subunit has chaperone activity. The binding of ATP and its subsequent hydrolysis by HslU are essential for unfolding of protein substrates subsequently hydrolyzed by HslV. HslU recognizes the N-terminal part of its protein substrates and unfolds these before they are guided to HslV for hydrolysis. In Parvibaculum lavamentivorans (strain DS-1 / DSM 13023 / NCIMB 13966), this protein is ATP-dependent protease ATPase subunit HslU.